Here is a 154-residue protein sequence, read N- to C-terminus: Small ribosomal subunit protein uS15 (154 aa).

Residues Met-1–His-11 show a composition bias toward basic residues. The tract at residues Met-1–Lys-24 is disordered.

Belongs to the universal ribosomal protein uS15 family. Part of the 30S ribosomal subunit.

The chain is Small ribosomal subunit protein uS15 from Nanoarchaeum equitans (strain Kin4-M).